Here is a 360-residue protein sequence, read N- to C-terminus: Holliday junction branch migration complex subunit RuvB (360 aa).

Positions Met1–Gln23 are disordered. The segment at Pro12–Tyr204 is large ATPase domain (RuvB-L). ATP is bound by residues Leu43, Arg44, Gly85, Lys88, Thr89, Thr90, Glu151 to Tyr153, Arg194, Tyr204, and Arg241. Thr89 contributes to the Mg(2+) binding site. Residues Thr205–Glu275 form a small ATPAse domain (RuvB-S) region. A head domain (RuvB-H) region spans residues Gln278–Phe360. DNA contacts are provided by Arg333 and Arg338.

Belongs to the RuvB family. Homohexamer. Forms an RuvA(8)-RuvB(12)-Holliday junction (HJ) complex. HJ DNA is sandwiched between 2 RuvA tetramers; dsDNA enters through RuvA and exits via RuvB. An RuvB hexamer assembles on each DNA strand where it exits the tetramer. Each RuvB hexamer is contacted by two RuvA subunits (via domain III) on 2 adjacent RuvB subunits; this complex drives branch migration. In the full resolvosome a probable DNA-RuvA(4)-RuvB(12)-RuvC(2) complex forms which resolves the HJ.

The protein resides in the cytoplasm. It catalyses the reaction ATP + H2O = ADP + phosphate + H(+). Functionally, the RuvA-RuvB-RuvC complex processes Holliday junction (HJ) DNA during genetic recombination and DNA repair, while the RuvA-RuvB complex plays an important role in the rescue of blocked DNA replication forks via replication fork reversal (RFR). RuvA specifically binds to HJ cruciform DNA, conferring on it an open structure. The RuvB hexamer acts as an ATP-dependent pump, pulling dsDNA into and through the RuvAB complex. RuvB forms 2 homohexamers on either side of HJ DNA bound by 1 or 2 RuvA tetramers; 4 subunits per hexamer contact DNA at a time. Coordinated motions by a converter formed by DNA-disengaged RuvB subunits stimulates ATP hydrolysis and nucleotide exchange. Immobilization of the converter enables RuvB to convert the ATP-contained energy into a lever motion, pulling 2 nucleotides of DNA out of the RuvA tetramer per ATP hydrolyzed, thus driving DNA branch migration. The RuvB motors rotate together with the DNA substrate, which together with the progressing nucleotide cycle form the mechanistic basis for DNA recombination by continuous HJ branch migration. Branch migration allows RuvC to scan DNA until it finds its consensus sequence, where it cleaves and resolves cruciform DNA. This Koribacter versatilis (strain Ellin345) protein is Holliday junction branch migration complex subunit RuvB.